Consider the following 155-residue polypeptide: Small ribosomal subunit protein uS7 (155 aa).

Belongs to the universal ribosomal protein uS7 family. Part of the 30S ribosomal subunit. Contacts proteins S9 and S11.

Its function is as follows. One of the primary rRNA binding proteins, it binds directly to 16S rRNA where it nucleates assembly of the head domain of the 30S subunit. Is located at the subunit interface close to the decoding center, probably blocks exit of the E-site tRNA. The sequence is that of Small ribosomal subunit protein uS7 from Nautilia profundicola (strain ATCC BAA-1463 / DSM 18972 / AmH).